Here is a 194-residue protein sequence, read N- to C-terminus: MAPLPLCFVTSSKKKLAEFLHAVGDNTIAHVSMDLPELQGDPETVAREKARAASRIYGGPVLVEDVSLCFNAYKGLPGVYVKSFLTAVGPSGLCNMLLPYEDKSAYALCIYAFCDVTVDDKPALFTGRADGRIVPPRGPQTFGWDCIFEPLEGGGKTYAEMEMVEKSAISHRGKALEKVKAFLTNSGVKVPCVK.

10–15 contacts ITP; sequence TSSKKK. Glu-37 contributes to the Mg(2+) binding site. ITP is bound by residues Lys-49, 65-66, Lys-82, 142-145, Lys-166, and 171-172; these read DV, FGWD, and HR.

It belongs to the HAM1 NTPase family. In terms of assembly, homodimer. The cofactor is Mg(2+). It depends on Mn(2+) as a cofactor.

The protein resides in the cytoplasm. The enzyme catalyses ITP + H2O = IMP + diphosphate + H(+). It carries out the reaction dITP + H2O = dIMP + diphosphate + H(+). The catalysed reaction is XTP + H2O = XMP + diphosphate + H(+). In terms of biological role, pyrophosphatase that hydrolyzes non-canonical purine nucleotides such as inosine triphosphate (ITP), deoxyinosine triphosphate (dITP) or xanthosine 5'-triphosphate (XTP) to their respective monophosphate derivatives. The enzyme does not distinguish between the deoxy- and ribose forms. Probably excludes non-canonical purines from RNA and DNA precursor pools, thus preventing their incorporation into RNA and DNA and avoiding chromosomal lesions. The protein is Inosine triphosphate pyrophosphatase of Giardia intestinalis (strain ATCC 50803 / WB clone C6) (Giardia lamblia).